A 307-amino-acid polypeptide reads, in one-letter code: Ornithine carbamoyltransferase (307 aa).

Carbamoyl phosphate is bound by residues 54–57 (STRT), glutamine 81, arginine 105, and 132–135 (HPCQ). L-ornithine-binding positions include asparagine 163, aspartate 221, and 225 to 226 (SM). Carbamoyl phosphate-binding positions include 261–262 (CL) and arginine 289.

Belongs to the aspartate/ornithine carbamoyltransferase superfamily. OTCase family.

It localises to the cytoplasm. It carries out the reaction carbamoyl phosphate + L-ornithine = L-citrulline + phosphate + H(+). Its pathway is amino-acid biosynthesis; L-arginine biosynthesis; L-arginine from L-ornithine and carbamoyl phosphate: step 1/3. Functionally, reversibly catalyzes the transfer of the carbamoyl group from carbamoyl phosphate (CP) to the N(epsilon) atom of ornithine (ORN) to produce L-citrulline. The chain is Ornithine carbamoyltransferase from Chromobacterium violaceum (strain ATCC 12472 / DSM 30191 / JCM 1249 / CCUG 213 / NBRC 12614 / NCIMB 9131 / NCTC 9757 / MK).